The chain runs to 930 residues: Probable outer membrane protein pmp8 (930 aa).

The first 26 residues, 1–26, serve as a signal peptide directing secretion; that stretch reads MKIPLHKLLISSTLVTPILLSIATYG. The Autotransporter domain maps to 636–930; the sequence is SIYQQRGLWA…NVDCGLRYSF (295 aa).

Belongs to the PMP outer membrane protein family.

The protein resides in the secreted. The protein localises to the cell wall. Its subcellular location is the cell outer membrane. The sequence is that of Probable outer membrane protein pmp8 (pmp8) from Chlamydia pneumoniae (Chlamydophila pneumoniae).